Here is a 70-residue protein sequence, read N- to C-terminus: uncharacterized protein (70 aa).

The tract at residues 40-70 is disordered; sequence LHQQRTAHKVTSPPSQRPQNSETKSDSQNRS. The span at 51–61 shows a compositional bias: polar residues; sequence SPPSQRPQNSE.

This is an uncharacterized protein from Bdellovibrio phage phiMH2K (Bacteriophage phiMH2K).